The following is a 198-amino-acid chain: Dual specificity protein phosphatase 13B (198 aa).

The 149-residue stretch at 45–193 (HIDEVWPSLF…LQVLDNRLGR (149 aa)) folds into the Tyrosine-protein phosphatase domain. The active-site Phosphocysteine intermediate is Cys-138.

It belongs to the protein-tyrosine phosphatase family. Non-receptor class dual specificity subfamily. As to expression, highly expressed in the testis (at protein level). Also found in the skeletal muscle.

It carries out the reaction O-phospho-L-tyrosyl-[protein] + H2O = L-tyrosyl-[protein] + phosphate. It catalyses the reaction O-phospho-L-seryl-[protein] + H2O = L-seryl-[protein] + phosphate. The enzyme catalyses O-phospho-L-threonyl-[protein] + H2O = L-threonyl-[protein] + phosphate. Functionally, dual specificity phosphatase that dephosphorylates MAPK8/JNK and MAPK14/p38, but not MAPK1/ERK2, in vitro. Exhibits intrinsic phosphatase activity towards both phospho-seryl/threonyl and -tyrosyl residues, with similar specific activities in vitro. This Homo sapiens (Human) protein is Dual specificity protein phosphatase 13B.